The following is a 396-amino-acid chain: Probable sugar efflux transporter (396 aa).

12 helical membrane-spanning segments follow: residues 15-35, 50-70, 81-101, 103-123, 136-156, 170-190, 209-229, 246-266, 275-295, 299-319, 333-353, and 364-384; these read VVTLAVAAFIFNTTEFVPVGL, VGIMLTIYAWVVALMSLPFML, LICLFVVFIASHVLSFLSWSF, VLVISRIGVAFAHAIFWSITA, AQALSLIATGTALAMVLGLPL, FFAIGIGALITLLCLIKLLPL, PALMSIYLLTVVVVTAHYTAY, FATALLLLLGGAGIIGSVIFG, ALVSTAIALLLVCLALLLPAA, IHLGVLSIFWGIAMMIIGLGM, VAMALFSGIFNIGIGAGALVG, and MIGYVGAVPAFAALIWSIIIF.

It belongs to the major facilitator superfamily. SotB (TC 2.A.1.2) family.

The protein localises to the cell inner membrane. Involved in the efflux of sugars. The physiological role may be the reduction of the intracellular concentration of toxic sugars or sugar metabolites. This is Probable sugar efflux transporter from Escherichia coli O139:H28 (strain E24377A / ETEC).